Here is a 354-residue protein sequence, read N- to C-terminus: UDP-N-acetylglucosamine--N-acetylmuramyl-(pentapeptide) pyrophosphoryl-undecaprenol N-acetylglucosamine transferase (354 aa).

Residues 15 to 17 (TGG), Asn127, Arg163, Ser191, Ile244, 263 to 268 (ALTVSE), and Gln288 contribute to the UDP-N-acetyl-alpha-D-glucosamine site.

The protein belongs to the glycosyltransferase 28 family. MurG subfamily.

It localises to the cell inner membrane. It catalyses the reaction di-trans,octa-cis-undecaprenyl diphospho-N-acetyl-alpha-D-muramoyl-L-alanyl-D-glutamyl-meso-2,6-diaminopimeloyl-D-alanyl-D-alanine + UDP-N-acetyl-alpha-D-glucosamine = di-trans,octa-cis-undecaprenyl diphospho-[N-acetyl-alpha-D-glucosaminyl-(1-&gt;4)]-N-acetyl-alpha-D-muramoyl-L-alanyl-D-glutamyl-meso-2,6-diaminopimeloyl-D-alanyl-D-alanine + UDP + H(+). It functions in the pathway cell wall biogenesis; peptidoglycan biosynthesis. Its function is as follows. Cell wall formation. Catalyzes the transfer of a GlcNAc subunit on undecaprenyl-pyrophosphoryl-MurNAc-pentapeptide (lipid intermediate I) to form undecaprenyl-pyrophosphoryl-MurNAc-(pentapeptide)GlcNAc (lipid intermediate II). This is UDP-N-acetylglucosamine--N-acetylmuramyl-(pentapeptide) pyrophosphoryl-undecaprenol N-acetylglucosamine transferase from Aliivibrio fischeri (strain ATCC 700601 / ES114) (Vibrio fischeri).